Consider the following 502-residue polypeptide: Cytochrome P450 monooxygenase pyr9 (502 aa).

Residues 5-25 (EDASIGTVWVTCLLAVGLYFI) traverse the membrane as a helical segment. Residues Asn205, Asn291, and Asn372 are each glycosylated (N-linked (GlcNAc...) asparagine). Cys437 contacts heme.

Belongs to the cytochrome P450 family. It depends on heme as a cofactor.

The protein localises to the membrane. It functions in the pathway secondary metabolite biosynthesis; terpenoid biosynthesis. Its function is as follows. Cytochrome P450 monooxygenase; part of the gene cluster that mediates the biosynthesis of pyripyropene A, a specific human acyl-coenzyme A:cholesterol acyltransferase 2 inhibitor. The first step of the pathway is the synthesis of nicotinyl-CoA from nicotinic acid by the nicotinic acid-CoA ligase pyr1. Nicotinyl-CoA is then a substrate of polyketide synthase pyr2 to produce 4-hydroxy-6-(3-pyridinyl)-2H-pyran-2-one (HPPO) which is further prenylated by the polyprenyl transferase pyr6 to yield farnesyl-HPPO. The next steps consist of an epoxidation of farnesyl-HPPO to epoxyfarnesyl-HPPO by FAD-dependent monooxygenase pyr5 and a cyclization of the terpenoid portion by the terpene cyclase pyr4 to yield deacetyl-pyripyropene E. The 2 cytochrome P450 monooxygenases pyr3 and pyr9, and the 2 acetyltransferases pyr7 and pyr8 are involved in the conversion of deacetyl-pyripyropene E into pyripyropene A through several cycles of oxidation and acetylation steps. Pyr7 acetylates deacetyl-pyripyropene E to pyripyropene E which is oxidized to 11-deacetyl-pyripyropene O by pyr3, which is in turn acetylated into pyripyropene O by pyr8. Pyripyropene O is then oxidized to deacetyl-pyripyropene A by pyr9. Deacetyl-pyripyropene A is finally acetylated to pyripyropene A by pyr8. This is Cytochrome P450 monooxygenase pyr9 from Aspergillus fumigatus (strain ATCC MYA-4609 / CBS 101355 / FGSC A1100 / Af293) (Neosartorya fumigata).